Here is a 101-residue protein sequence, read N- to C-terminus: Small ribosomal subunit protein uS14 (101 aa).

Belongs to the universal ribosomal protein uS14 family. In terms of assembly, part of the 30S ribosomal subunit. Contacts proteins S3 and S10.

Binds 16S rRNA, required for the assembly of 30S particles and may also be responsible for determining the conformation of the 16S rRNA at the A site. This is Small ribosomal subunit protein uS14 from Aeromonas hydrophila subsp. hydrophila (strain ATCC 7966 / DSM 30187 / BCRC 13018 / CCUG 14551 / JCM 1027 / KCTC 2358 / NCIMB 9240 / NCTC 8049).